The sequence spans 311 residues: Sulfate adenylyltransferase subunit 2 (311 aa).

This sequence belongs to the PAPS reductase family. CysD subfamily. In terms of assembly, heterodimer composed of CysD, the smaller subunit, and CysN.

The enzyme catalyses sulfate + ATP + H(+) = adenosine 5'-phosphosulfate + diphosphate. It participates in sulfur metabolism; hydrogen sulfide biosynthesis; sulfite from sulfate: step 1/3. In terms of biological role, with CysN forms the ATP sulfurylase (ATPS) that catalyzes the adenylation of sulfate producing adenosine 5'-phosphosulfate (APS) and diphosphate, the first enzymatic step in sulfur assimilation pathway. APS synthesis involves the formation of a high-energy phosphoric-sulfuric acid anhydride bond driven by GTP hydrolysis by CysN coupled to ATP hydrolysis by CysD. The polypeptide is Sulfate adenylyltransferase subunit 2 (Caulobacter vibrioides (strain ATCC 19089 / CIP 103742 / CB 15) (Caulobacter crescentus)).